We begin with the raw amino-acid sequence, 89 residues long: Acylphosphatase (89 aa).

Positions 4-89 constitute an Acylphosphatase-like domain; that stretch reads SRRFLVSGTV…EQPPEGFRVL (86 aa). Catalysis depends on residues Arg19 and Asn37.

The protein belongs to the acylphosphatase family.

The catalysed reaction is an acyl phosphate + H2O = a carboxylate + phosphate + H(+). The protein is Acylphosphatase (acyP) of Alkalilimnicola ehrlichii (strain ATCC BAA-1101 / DSM 17681 / MLHE-1).